The sequence spans 1045 residues: Extracellular serine protease (1045 aa).

An N-terminal signal peptide occupies residues 1–27 (MILNKKLKLAYCVFLGCYGLSLHSSLA). A Peptidase S8 domain is found at 49-396 (QWGLEAISAE…WGRVNLRDAI (348 aa)). Catalysis depends on charge relay system residues aspartate 76, histidine 112, and serine 341. Residues 646–1045 (SLASTENDKE…SVNAGLTWRF (400 aa)) constitute a propeptide that is removed on maturation. Positions 769 to 1045 (IKADDNGAWA…SVNAGLTWRF (277 aa)) constitute an Autotransporter domain.

It belongs to the peptidase S8 family.

Its subcellular location is the secreted. In Serratia marcescens, this protein is Extracellular serine protease.